The sequence spans 637 residues: MSQAAARLMERILQPVPEPFALLYRPESSGPGLLNVLIGEMSQPQVLADIDLPAPSIGAPRLDVLTLIPYCQIAERGFAAVDDQSPLLAMNITEQQTISIEQMLALLPNVPIQLNNERFDLSDASYAEIVSQVIANEIGSGEGANFVIKRTFLAEISEYQPASALSFFRHLLEREKGVYWTFIIHTGSRTFVGASPERHISVKDGLAVMNPISGTYRYPPAGPSLTEVMDFLADRKEADELYMVVDEELKMMARICEDGGHVLGPYLKEMTHLAHTEYFIEGRTRRDVREILHETLFAPTVTGSPLESACRVIERYEPQGRAYYSGMAALIGSDGKGGRSLDSAILIRTADIDNCGQVRISVGSTIVRHSEPLTEAAESRAKAAGLIAALKNQAASRFGDHLQVRAALASRNAYVSDFWLMNSQQRQQTQSDFSGRQVLIVDAEDTFTSMIAKQLRALGLVVTVRSFSDEYSFDGYDLVIMGPGPGNPSDVQLPKIDHLHVAIRSLLNQQRPFLAVCLSHQVLSLCLGLELQRKAIPNQGVQKQIDLFGNAERVGFYNTFAARSSSDRLDIDGIGTVEISRDSETGEVHALRGPAFASMQFHAESLLTQEGPRIIADLLRHALIHTPVDSSVSAAGR.

The tract at residues 1 to 434 (MSQAAARLME…QRQQTQSDFS (434 aa)) is anthranilate synthase component I. One can recognise a Glutamine amidotransferase type-1 domain in the interval 437 to 628 (QVLIVDAEDT…LRHALIHTPV (192 aa)). Catalysis depends on for GATase activity residues Cys-517, His-602, and Glu-604.

The enzyme catalyses chorismate + L-glutamine = anthranilate + pyruvate + L-glutamate + H(+). It functions in the pathway antibiotic biosynthesis; phenazine biosynthesis. Functionally, involved in the biosynthesis of the antibiotic, phenazine, a nitrogen-containing heterocyclic molecule having important roles in virulence, competition and biological control. The protein is Anthranilate synthase, phenazine specific (phzE) of Pseudomonas fluorescens.